The sequence spans 125 residues: Small ribosomal subunit protein uS12 (125 aa).

Asp-89 carries the post-translational modification 3-methylthioaspartic acid. The tract at residues 105–125 (AGVKDRKQARSKYGAKRPKAA) is disordered. The span at 113-125 (ARSKYGAKRPKAA) shows a compositional bias: basic residues.

Belongs to the universal ribosomal protein uS12 family. Part of the 30S ribosomal subunit. Contacts proteins S8 and S17. May interact with IF1 in the 30S initiation complex.

Functionally, with S4 and S5 plays an important role in translational accuracy. In terms of biological role, interacts with and stabilizes bases of the 16S rRNA that are involved in tRNA selection in the A site and with the mRNA backbone. Located at the interface of the 30S and 50S subunits, it traverses the body of the 30S subunit contacting proteins on the other side and probably holding the rRNA structure together. The combined cluster of proteins S8, S12 and S17 appears to hold together the shoulder and platform of the 30S subunit. In Methylobacillus flagellatus (strain ATCC 51484 / DSM 6875 / VKM B-1610 / KT), this protein is Small ribosomal subunit protein uS12.